A 926-amino-acid polypeptide reads, in one-letter code: Alpha-aminoadipic semialdehyde synthase, mitochondrial (926 aa).

Residues 1-27 (MLRAQRPRLARLRACLSRGLHHKPVMA) constitute a mitochondrion transit peptide. Residues 28 to 455 (LRREDVNAWE…DAVITSNGLL (428 aa)) form a lysine-ketoglutarate reductase region. Residues Lys48, Lys52, and Lys56 each carry the N6-acetyllysine modification. At Lys93 the chain carries N6-acetyllysine; alternate. Lys93 bears the N6-succinyllysine; alternate mark. Lys128 bears the N6-acetyllysine mark. Lys138 bears the N6-acetyllysine; alternate mark. Lys138 carries the N6-succinyllysine; alternate modification. Lys274 is modified (N6-succinyllysine). Lys286 is modified (N6-acetyllysine; alternate). Lys286 bears the N6-succinyllysine; alternate mark. Lys333 carries the N6-succinyllysine modification. The residue at position 458 (Lys458) is an N6-acetyllysine; alternate. Lys458 is modified (N6-succinyllysine; alternate). The saccharopine dehydrogenase stretch occupies residues 477 to 926 (MSTKKKVLVL…VFNTQSTIKL (450 aa)). 3 residues coordinate NAD(+): Ser488, Asp512, and Gln516. N6-acetyllysine; alternate occurs at positions 523 and 535. Residues Lys523 and Lys535 each carry the N6-succinyllysine; alternate modification. The NAD(+) site is built by Leu554, Ala576, and Ser577. Residue 577–578 (SY) coordinates L-saccharopine. Lys584 carries the post-translational modification N6-acetyllysine; alternate. Lys584 is subject to N6-succinyllysine; alternate. Residues Leu603, Asp604, and Pro605 each contribute to the NAD(+) site. Residue Asp604 participates in L-saccharopine binding. An L-saccharopine-binding site is contributed by Arg703. Position 707 is an N6-acetyllysine (Lys707). 724–726 (TLR) is an L-saccharopine binding site. An N6-succinyllysine modification is found at Lys732. The residue at position 739 (Lys739) is an N6-acetyllysine. Lys761 is subject to N6-acetyllysine; alternate. Lys761 is subject to N6-succinyllysine; alternate. N6-acetyllysine occurs at positions 778 and 780.

This sequence in the N-terminal section; belongs to the AlaDH/PNT family. It in the C-terminal section; belongs to the saccharopine dehydrogenase family. As to quaternary structure, homotetramer. In terms of tissue distribution, highly expressed in kidney and liver, very low expression is seen in heart, brain, spleen, lung, skeletal muscle and testis.

The protein localises to the mitochondrion. The enzyme catalyses L-saccharopine + NADP(+) + H2O = L-lysine + 2-oxoglutarate + NADPH + H(+). The catalysed reaction is L-saccharopine + NAD(+) + H2O = (S)-2-amino-6-oxohexanoate + L-glutamate + NADH + H(+). It participates in amino-acid degradation; L-lysine degradation via saccharopine pathway; glutaryl-CoA from L-lysine: step 1/6. It functions in the pathway amino-acid degradation; L-lysine degradation via saccharopine pathway; glutaryl-CoA from L-lysine: step 2/6. In terms of biological role, bifunctional enzyme that catalyzes the first two steps in lysine degradation. This Mus musculus (Mouse) protein is Alpha-aminoadipic semialdehyde synthase, mitochondrial.